The primary structure comprises 127 residues: MSVTYNKKKKRNVVVGVVHIHATYNNIIVTITDQQGHSLVSTSAGAYGFKGSKKATPYAAQETAGHAVKTVVEQNGMKTVSIKVSGPGAGREAAIRAVQACNLNVTSIKDTTKLPHNGCKLPGRRRV.

It belongs to the universal ribosomal protein uS11 family. Part of the 30S ribosomal subunit. Interacts with proteins S7 and S18. Binds to IF-3.

In terms of biological role, located on the platform of the 30S subunit, it bridges several disparate RNA helices of the 16S rRNA. Forms part of the Shine-Dalgarno cleft in the 70S ribosome. This Ehrlichia ruminantium (strain Gardel) protein is Small ribosomal subunit protein uS11.